A 619-amino-acid polypeptide reads, in one-letter code: Lysophospholipid acyltransferase (619 aa).

The Lumenal segment spans residues 1–19 (MYNPVDAVLTKIITNYGID). The helical transmembrane segment at 20-39 (SFTLRYAICLLGSFPLNAIL) threads the bilayer. Residues 40 to 51 (KRIPEKRIGLKC) lie on the Cytoplasmic side of the membrane. The chain crosses the membrane as a helical span at residues 52-72 (CFIISMSMFYLFGVLNLVSGF). Over 73–92 (RTLFISTMFTYLISRFYRSK) the chain is Lumenal. The helical transmembrane segment at 93–113 (FMPHLNFMFVMGHLAINHIHA) threads the bilayer. The Cytoplasmic portion of the chain corresponds to 114 to 231 (QFLNEQTQTT…GERRQIPKNG (118 aa)). Asp-146 acts as the Nucleophile in catalysis. Residues 232 to 252 (KLALWKVVQGLAWMILSTLGM) form a helical membrane-spanning segment. Residues 253–274 (KHFPVKYVLDKDGFPTRSFIFR) are Lumenal-facing. Residues 275-295 (IHYLFLLGFIHRFKYYAAWTI) form a helical membrane-spanning segment. At 296 to 429 (SEGSCILCGL…TPLPSKKIYD (134 aa)) the chain is on the cytoplasmic side. Catalysis depends on Glu-297, which acts as the Nucleophile. Residue His-382 is part of the active site. The chain crosses the membrane as a helical span at residues 430-450 (LVGIYAIKLAFGYMVQPFIIL). The Lumenal segment spans residues 451-456 (DLKPSL). Residues 457-477 (MVWGSVYFYVHIIVAFSFFLF) form a helical membrane-spanning segment. Topologically, residues 478–619 (RGPYAKQVTE…SPKPISKKEE (142 aa)) are cytoplasmic. Ser-513 bears the Phosphoserine mark. Positions 545–593 (ELEKWDNAKEDWEDFCKDYKEWRNKNGLEIEEENLSKAFERFKQEFSNA) form a coiled coil. The segment at 592–619 (NAASGSGERVRKMSFSGYSPKPISKKEE) is disordered. Ser-605, Ser-610, and Ser-615 each carry phosphoserine.

This sequence belongs to the membrane-bound acyltransferase family.

It is found in the endoplasmic reticulum membrane. It carries out the reaction a 1-acyl-sn-glycero-3-phosphate + an acyl-CoA = a 1,2-diacyl-sn-glycero-3-phosphate + CoA. It catalyses the reaction a 1-acyl-sn-glycero-3-phosphocholine + an acyl-CoA = a 1,2-diacyl-sn-glycero-3-phosphocholine + CoA. The catalysed reaction is 1-acyl-sn-glycero-3-phospho-(1'-sn-glycerol) + an acyl-CoA = a 1,2-diacyl-sn-glycero-3-phospho-(1'-sn-glycerol) + CoA. The enzyme catalyses a 1-acyl-sn-glycero-3-phospho-(1D-myo-inositol) + an acyl-CoA = a 1,2-diacyl-sn-glycero-3-phospho-(1D-myo-inositol) + CoA. It carries out the reaction a 1-acyl-sn-glycero-3-phospho-L-serine + an acyl-CoA = a 1,2-diacyl-sn-glycero-3-phospho-L-serine + CoA. It catalyses the reaction a 1-acyl-sn-glycero-3-phosphoethanolamine + an acyl-CoA = a 1,2-diacyl-sn-glycero-3-phosphoethanolamine + CoA. The catalysed reaction is 1-(9Z-octadecenoyl)-sn-glycero-3-phosphoethanolamine + (9Z)-octadecenoyl-CoA = 1,2-di-(9Z-octadecenoyl)-sn-glycero-3-phosphoethanolamine + CoA. The enzyme catalyses 1-(9Z-octadecenoyl)-sn-glycero-3-phosphoethanolamine + (9Z)-hexadecenoyl-CoA = 1-(9Z)-octadecenoyl-2-(9Z)-hexadecenoyl-sn-glycero-3-phosphoethanolamine + CoA. It carries out the reaction 1-(9Z-octadecenoyl)-sn-glycero-3-phosphoethanolamine + hexadecanoyl-CoA = 1-(9Z-octadecenoyl)-2-hexadecanoyl-sn-glycero-3-phosphoethanolamine + CoA. It catalyses the reaction 1-(9Z-octadecenoyl)-sn-glycero-3-phosphoethanolamine + tetradecanoyl-CoA = 1-(9Z)-octadecenoyl-2-tetradecanoyl-sn-glycero-3-phosphoethanolamine + CoA. The catalysed reaction is 1-(9Z-octadecenoyl)-sn-glycero-3-phosphate + (9Z)-octadecenoyl-CoA = 1,2-di-(9Z-octadecenoyl)-sn-glycero-3-phosphate + CoA. The enzyme catalyses (9Z)-hexadecenoyl-CoA + 1-hexadecanoyl-sn-glycero-3-phosphocholine = 1-hexadecanoyl-2-(9Z-hexadecenoyl)-sn-glycero-3-phosphocholine + CoA. It carries out the reaction 1-hexadecanoyl-sn-glycero-3-phosphocholine + (9Z)-octadecenoyl-CoA = 1-hexadecanoyl-2-(9Z-octadecenoyl)-sn-glycero-3-phosphocholine + CoA. It catalyses the reaction 1-tetradecanoyl-sn-glycero-3-phosphoethanolamine + (9Z)-octadecenoyl-CoA = 1-tetradecanoyl-2-(9Z-octadecenoyl)-sn-glycero-3-phosphoethanolamine + CoA. The catalysed reaction is 1-(9Z-octadecenoyl)-sn-glycero-3-phospho-L-serine + (9Z)-octadecenoyl-CoA = 1,2-di-(9Z)-octadecenoyl-sn-glycero-3-phospho-L-serine + CoA. The enzyme catalyses a 1-acyl-sn-glycero-3-phospho-(1D-myo-inositol) + (9Z)-octadecenoyl-CoA = a 1-acyl-2-(9Z-octadecenoyl)-sn-glycero-3-phospho-(1D-myo-inositol) + CoA. Its pathway is lipid metabolism; phospholipid metabolism. Broad specificity membrane-bound O-acyltransferase that mediates the incorporation of unsaturated acyl chains into the sn-2 position of various lysophospholipids. Preferentially acylates lysophosphocholine (LPC), but also lysophosphoethanolamine (LPE), lysophosphatidylglycerol (LPG), lysophosphatidic acid (LPA), lysophosphoethanolamine (LPE), lysophosphoinositol (LPI), and lysophosphoserine (LPS). Prefers an acyl residue to an alkyl residue at the sn-1 position of lysophospholipid acceptors. Accepts acyl chains in acyl-CoA from C-2 to C-20, and shows strong preference for unsaturated acyl-CoAs with 16-20 carbons. Together with SLC1, plays a central role in phosphatidic acid (PA) biosynthesis. PA is the intermediate, from which all glycerophospholipids are synthesized. Can also introduce an acyl chain at the sn-1 position of the lysophosphatidylcholine analog 1-hydroxy-2-hexadecyl-sn-glycero-3-phosphocholine (HHPC). The sequence is that of Lysophospholipid acyltransferase from Saccharomyces cerevisiae (strain ATCC 204508 / S288c) (Baker's yeast).